Reading from the N-terminus, the 145-residue chain is D-aminoacyl-tRNA deacylase (145 aa).

Residues 137-138 (GP) carry the Gly-cisPro motif, important for rejection of L-amino acids motif.

It belongs to the DTD family. As to quaternary structure, homodimer.

The protein localises to the cytoplasm. The enzyme catalyses glycyl-tRNA(Ala) + H2O = tRNA(Ala) + glycine + H(+). The catalysed reaction is a D-aminoacyl-tRNA + H2O = a tRNA + a D-alpha-amino acid + H(+). An aminoacyl-tRNA editing enzyme that deacylates mischarged D-aminoacyl-tRNAs. Also deacylates mischarged glycyl-tRNA(Ala), protecting cells against glycine mischarging by AlaRS. Acts via tRNA-based rather than protein-based catalysis; rejects L-amino acids rather than detecting D-amino acids in the active site. By recycling D-aminoacyl-tRNA to D-amino acids and free tRNA molecules, this enzyme counteracts the toxicity associated with the formation of D-aminoacyl-tRNA entities in vivo and helps enforce protein L-homochirality. The protein is D-aminoacyl-tRNA deacylase of Limosilactobacillus fermentum (strain NBRC 3956 / LMG 18251) (Lactobacillus fermentum).